A 194-amino-acid polypeptide reads, in one-letter code: Insertion element IS136 uncharacterized 21.2 kDa protein (194 aa).

The tract at residues 73–103 (SCDRACAPTPGRDPPVSSLPNSRQPARQNPR) is disordered. Residues 90–103 (SLPNSRQPARQNPR) are compositionally biased toward polar residues.

The chain is Insertion element IS136 uncharacterized 21.2 kDa protein from Agrobacterium tumefaciens (strain T37).